The chain runs to 512 residues: NAD-dependent deacetylase sir2A (512 aa).

The UBP-type zinc-finger motif lies at 7 to 110 (IECIHLKDEY…EILENIKSSN (104 aa)). Cys-9, His-11, Cys-34, Cys-37, Cys-46, Cys-49, Cys-54, His-61, His-65, His-71, Cys-84, and Cys-87 together coordinate Zn(2+). Residues 113–122 (DKIVPKKDQK) are compositionally biased toward basic and acidic residues. The segment at 113-196 (DKIVPKKDQK…DESSSEGEES (84 aa)) is disordered. The segment covering 130–175 (VVPSASITTSSTTTSISKQTTVNNTTTTSSSSTTTTTTTTSTTINN) has biased composition (low complexity). Over residues 176 to 195 (NEEEEESESETDESSSEGEE) the composition is skewed to acidic residues. The Deacetylase sirtuin-type domain maps to 231–503 (CVLKKPTIEE…LDLIKLLGWE (273 aa)). His-361 functions as the Proton acceptor in the catalytic mechanism. Zn(2+) contacts are provided by Cys-369, Cys-372, Cys-393, and Cys-399.

This sequence belongs to the sirtuin family. It depends on Zn(2+) as a cofactor.

The catalysed reaction is N(6)-acetyl-L-lysyl-[protein] + NAD(+) + H2O = 2''-O-acetyl-ADP-D-ribose + nicotinamide + L-lysyl-[protein]. Its function is as follows. NAD-dependent deacetylase, which plays an important role in the regulation of transcriptional repression. The sequence is that of NAD-dependent deacetylase sir2A (sir2A) from Dictyostelium discoideum (Social amoeba).